The primary structure comprises 302 residues: uncharacterized protein (302 aa).

9 helical membrane-spanning segments follow: residues 3-23, 39-59, 77-97, 106-126, 128-148, 163-183, 199-219, 227-247, and 254-274; these read ILGVGYFLLGLILLYYGSDWF, FVIGATVMAIGTSLPEILTSA, SCICNIGLVLGLSAIISPIIV, LVYLLFVIFAAVIGIDGFSWI, GVVLLILFIIYLRWTVKNGSA, FSLVLLIIGLIGVLVGAELFV, VIGFTLVAFGTSLPELMVSLA, GMVLGNVIGSNIADIGGALAV, and LPAENVQMAVLVIMSLLLYLF.

The protein belongs to the Ca(2+):cation antiporter (CaCA) (TC 2.A.19) family.

The protein resides in the cell membrane. This is an uncharacterized protein from Methanocaldococcus jannaschii (strain ATCC 43067 / DSM 2661 / JAL-1 / JCM 10045 / NBRC 100440) (Methanococcus jannaschii).